The chain runs to 193 residues: Rho-related GTP-binding protein RhoC (193 aa).

12–19 serves as a coordination point for GTP; that stretch reads GDGACGKT. The Effector region signature appears at 34-42; the sequence is YVPTVFENY. Residues 59-63 and 117-120 contribute to the GTP site; these read DTAGQ and NKKD. C190 is subject to Cysteine methyl ester. C190 carries the S-geranylgeranyl cysteine lipid modification. A propeptide spans 191-193 (removed in mature form); it reads PIL.

The protein belongs to the small GTPase superfamily. Rho family. In terms of assembly, interacts with RTKN. Interacts with AKAP13. Interacts with DIAPH1. Interacts with PKN2. Interacts with ROCK1 and ROCK2. Interacts with ARHGDIA. Interacts with RIPOR1.

The protein resides in the cell membrane. It localises to the cleavage furrow. In terms of biological role, regulates a signal transduction pathway linking plasma membrane receptors to the assembly of focal adhesions and actin stress fibers. Serves as a microtubule-dependent signal that is required for the myosin contractile ring formation during cell cycle cytokinesis. Regulates apical junction formation in bronchial epithelial cells. The polypeptide is Rho-related GTP-binding protein RhoC (RHOC) (Bos taurus (Bovine)).